A 294-amino-acid polypeptide reads, in one-letter code: 4-diphosphocytidyl-2-C-methyl-D-erythritol kinase (294 aa).

Lysine 16 is an active-site residue. 99–109 contacts ATP; it reads PMGAGLGGGSS. Aspartate 141 is an active-site residue.

The protein belongs to the GHMP kinase family. IspE subfamily.

The catalysed reaction is 4-CDP-2-C-methyl-D-erythritol + ATP = 4-CDP-2-C-methyl-D-erythritol 2-phosphate + ADP + H(+). Its pathway is isoprenoid biosynthesis; isopentenyl diphosphate biosynthesis via DXP pathway; isopentenyl diphosphate from 1-deoxy-D-xylulose 5-phosphate: step 3/6. Its function is as follows. Catalyzes the phosphorylation of the position 2 hydroxy group of 4-diphosphocytidyl-2C-methyl-D-erythritol. This Polynucleobacter asymbioticus (strain DSM 18221 / CIP 109841 / QLW-P1DMWA-1) (Polynucleobacter necessarius subsp. asymbioticus) protein is 4-diphosphocytidyl-2-C-methyl-D-erythritol kinase.